Consider the following 108-residue polypeptide: Nucleoid-associated protein BMASAVP1_A1850 (108 aa).

The tract at residues 84–108 (EATSQEKMSGMTSGLPLPPGFKLPF) is disordered. Polar residues predominate over residues 85–95 (ATSQEKMSGMT). Residues 99–108 (PLPPGFKLPF) are compositionally biased toward pro residues.

Belongs to the YbaB/EbfC family. Homodimer.

Its subcellular location is the cytoplasm. The protein resides in the nucleoid. Its function is as follows. Binds to DNA and alters its conformation. May be involved in regulation of gene expression, nucleoid organization and DNA protection. The protein is Nucleoid-associated protein BMASAVP1_A1850 of Burkholderia mallei (strain SAVP1).